A 154-amino-acid chain; its full sequence is Small ribosomal subunit protein uS13m (154 aa).

Residues 1-30 (MLGLRRSATTLFDISQSLLRNVTFHGLRVQ) constitute a mitochondrion transit peptide. The tract at residues 121 to 154 (RHGLPCRGQRTSTNARTKKGKAVAIAGKKKAPRK) is disordered. Basic residues predominate over residues 136–154 (RTKKGKAVAIAGKKKAPRK).

This sequence belongs to the universal ribosomal protein uS13 family. As to quaternary structure, part of the small ribosomal subunit.

It localises to the mitochondrion. Located at the top of the head of the small subunit, it contacts several helices of the 18S rRNA. In Arabidopsis thaliana (Mouse-ear cress), this protein is Small ribosomal subunit protein uS13m (RPS13).